We begin with the raw amino-acid sequence, 440 residues long: 5-methylthioadenosine/S-adenosylhomocysteine deaminase (440 aa).

Zn(2+) is bound by residues His-70 and His-72. Substrate is bound by residues Glu-99 and His-191. Residue His-218 participates in Zn(2+) binding. Residues Glu-221 and Asp-306 each coordinate substrate. Asp-306 is a Zn(2+) binding site.

It belongs to the metallo-dependent hydrolases superfamily. MTA/SAH deaminase family. It depends on Zn(2+) as a cofactor.

The catalysed reaction is S-adenosyl-L-homocysteine + H2O + H(+) = S-inosyl-L-homocysteine + NH4(+). The enzyme catalyses S-methyl-5'-thioadenosine + H2O + H(+) = S-methyl-5'-thioinosine + NH4(+). In terms of biological role, catalyzes the deamination of 5-methylthioadenosine and S-adenosyl-L-homocysteine into 5-methylthioinosine and S-inosyl-L-homocysteine, respectively. Is also able to deaminate adenosine. The polypeptide is 5-methylthioadenosine/S-adenosylhomocysteine deaminase (Nitratidesulfovibrio vulgaris (strain DSM 19637 / Miyazaki F) (Desulfovibrio vulgaris)).